The primary structure comprises 310 residues: Methionyl-tRNA formyltransferase (310 aa).

110–113 (SLLP) is a binding site for (6S)-5,6,7,8-tetrahydrofolate.

It belongs to the Fmt family.

The enzyme catalyses L-methionyl-tRNA(fMet) + (6R)-10-formyltetrahydrofolate = N-formyl-L-methionyl-tRNA(fMet) + (6S)-5,6,7,8-tetrahydrofolate + H(+). Functionally, attaches a formyl group to the free amino group of methionyl-tRNA(fMet). The formyl group appears to play a dual role in the initiator identity of N-formylmethionyl-tRNA by promoting its recognition by IF2 and preventing the misappropriation of this tRNA by the elongation apparatus. This is Methionyl-tRNA formyltransferase from Streptomyces avermitilis (strain ATCC 31267 / DSM 46492 / JCM 5070 / NBRC 14893 / NCIMB 12804 / NRRL 8165 / MA-4680).